The sequence spans 642 residues: Threonine--tRNA ligase (642 aa).

In terms of domain architecture, TGS spans 1–61 (MPVITLPDGS…ENDAQLSIIT (61 aa)). Positions 243 to 534 (DHRKIGKQLD…LTEEFAGFFP (292 aa)) are catalytic. K286 bears the N6-acetyllysine mark. 3 residues coordinate Zn(2+): C334, H385, and H511.

The protein belongs to the class-II aminoacyl-tRNA synthetase family. Homodimer. Zn(2+) serves as cofactor.

The protein resides in the cytoplasm. It carries out the reaction tRNA(Thr) + L-threonine + ATP = L-threonyl-tRNA(Thr) + AMP + diphosphate + H(+). Its function is as follows. Catalyzes the attachment of threonine to tRNA(Thr) in a two-step reaction: L-threonine is first activated by ATP to form Thr-AMP and then transferred to the acceptor end of tRNA(Thr). Also edits incorrectly charged L-seryl-tRNA(Thr). The sequence is that of Threonine--tRNA ligase from Escherichia coli O8 (strain IAI1).